The following is a 476-amino-acid chain: Sulfate adenylyltransferase subunit 1 (476 aa).

The region spanning 24–239 (KSLLRFLTCG…LLETVDVDHE (216 aa)) is the tr-type G domain. The tract at residues 33–40 (GSVDDGKS) is G1. 33 to 40 (GSVDDGKS) provides a ligand contact to GTP. Residues 91–95 (GITID) form a G2 region. The tract at residues 112 to 115 (DTPG) is G3. Residues 112–116 (DTPGH) and 167–170 (NKMD) contribute to the GTP site. Positions 167-170 (NKMD) are G4. The interval 205–207 (SAL) is G5.

It belongs to the TRAFAC class translation factor GTPase superfamily. Classic translation factor GTPase family. CysN/NodQ subfamily. Heterodimer composed of CysD, the smaller subunit, and CysN.

It carries out the reaction sulfate + ATP + H(+) = adenosine 5'-phosphosulfate + diphosphate. It participates in sulfur metabolism; hydrogen sulfide biosynthesis; sulfite from sulfate: step 1/3. With CysD forms the ATP sulfurylase (ATPS) that catalyzes the adenylation of sulfate producing adenosine 5'-phosphosulfate (APS) and diphosphate, the first enzymatic step in sulfur assimilation pathway. APS synthesis involves the formation of a high-energy phosphoric-sulfuric acid anhydride bond driven by GTP hydrolysis by CysN coupled to ATP hydrolysis by CysD. The chain is Sulfate adenylyltransferase subunit 1 from Vibrio campbellii (strain ATCC BAA-1116).